The primary structure comprises 581 residues: Jasmonoyl--L-amino acid synthetase GH3.5 (581 aa).

Serine 92 is an ATP binding site. Residue serine 95 participates in jasmonate binding. ATP contacts are provided by residues threonine 115, asparagine 161, and 324–329 (GASEGW). 159–163 (TTNLY) contacts an L-alpha-amino acid. Jasmonate contacts are provided by residues 321–324 (ADYG) and serine 326. 534–538 (EILDH) provides a ligand contact to an L-alpha-amino acid. Position 561 (lysine 561) interacts with ATP.

Belongs to the IAA-amido conjugating enzyme family. Expressed in green shoots, roots and flowers.

It carries out the reaction a jasmonate + an L-alpha-amino acid + ATP = a jasmonyl-L-amino acid + AMP + diphosphate + H(+). In terms of biological role, catalyzes the synthesis of jasmonate-amino acid conjugates by adenylation. Catalyzes the conjugation of jasmonate (JA) to Ile when expressed in a heterologous system (E.coli). Catalyzes in vitro the conjugation of jasmonate (JA) to Ile, Phe, Cys, Leu, Met, Ala, Val and Trp. Involved in the production of JA-Ile in response to infection by the rice blast fungus Magnaporthe oryzae. Required for the accumulation of the flavonoid phytoalexin sakuranetin in response to infection by the rice blast fungus. Involved in herbivory-induced JA-Ile accumulation. Involved in the production of JA-Ile in response to wounding. Required for modulation of light and JA signaling in photomorphogenesis. Required for normal seed development. Required for optimal flower opening and closing and anther dehiscence. May catalyze the synthesis of indole-3-acetic acid (IAA)-amino acid conjugates, providing a mechanism for the plant to cope with the presence of excess auxin. In Oryza sativa subsp. japonica (Rice), this protein is Jasmonoyl--L-amino acid synthetase GH3.5.